The primary structure comprises 381 residues: Succinyl-diaminopimelate desuccinylase (381 aa).

Position 71 (His71) interacts with Zn(2+). Asp73 is an active-site residue. Asp104 is a binding site for Zn(2+). Catalysis depends on Glu138, which acts as the Proton acceptor. Residues Glu139, Glu167, and His353 each contribute to the Zn(2+) site.

This sequence belongs to the peptidase M20A family. DapE subfamily. In terms of assembly, homodimer. It depends on Zn(2+) as a cofactor. Co(2+) is required as a cofactor.

It catalyses the reaction N-succinyl-(2S,6S)-2,6-diaminopimelate + H2O = (2S,6S)-2,6-diaminopimelate + succinate. Its pathway is amino-acid biosynthesis; L-lysine biosynthesis via DAP pathway; LL-2,6-diaminopimelate from (S)-tetrahydrodipicolinate (succinylase route): step 3/3. Functionally, catalyzes the hydrolysis of N-succinyl-L,L-diaminopimelic acid (SDAP), forming succinate and LL-2,6-diaminopimelate (DAP), an intermediate involved in the bacterial biosynthesis of lysine and meso-diaminopimelic acid, an essential component of bacterial cell walls. The polypeptide is Succinyl-diaminopimelate desuccinylase (Shewanella piezotolerans (strain WP3 / JCM 13877)).